A 246-amino-acid chain; its full sequence is Cytochrome c oxidase subunit 2 (246 aa).

Transmembrane regions (helical) follow at residues 31-51 (HMMY…YVMM) and 72-92 (IMWT…SFML). Positions 175, 210, 212, 214, 218, and 221 each coordinate Cu cation. Position 212 (Glu212) interacts with Mg(2+).

This sequence belongs to the cytochrome c oxidase subunit 2 family. As to quaternary structure, component of the cytochrome c oxidase (complex IV, CIV), a multisubunit enzyme composed of a catalytic core of 3 subunits and several supernumerary subunits. The complex exists as a monomer or a dimer and forms supercomplexes (SCs) in the inner mitochondrial membrane with ubiquinol-cytochrome c oxidoreductase (cytochrome b-c1 complex, complex III, CIII). Cu cation is required as a cofactor.

It is found in the mitochondrion inner membrane. The catalysed reaction is 4 Fe(II)-[cytochrome c] + O2 + 8 H(+)(in) = 4 Fe(III)-[cytochrome c] + 2 H2O + 4 H(+)(out). Its function is as follows. Component of the cytochrome c oxidase, the last enzyme in the mitochondrial electron transport chain which drives oxidative phosphorylation. The respiratory chain contains 3 multisubunit complexes succinate dehydrogenase (complex II, CII), ubiquinol-cytochrome c oxidoreductase (cytochrome b-c1 complex, complex III, CIII) and cytochrome c oxidase (complex IV, CIV), that cooperate to transfer electrons derived from NADH and succinate to molecular oxygen, creating an electrochemical gradient over the inner membrane that drives transmembrane transport and the ATP synthase. Cytochrome c oxidase is the component of the respiratory chain that catalyzes the reduction of oxygen to water. Electrons originating from reduced cytochrome c in the intermembrane space (IMS) are transferred via the dinuclear copper A center (CU(A)) of subunit 2 and heme A of subunit 1 to the active site in subunit 1, a binuclear center (BNC) formed by heme A3 and copper B (CU(B)). The BNC reduces molecular oxygen to 2 water molecules using 4 electrons from cytochrome c in the IMS and 4 protons from the mitochondrial matrix. The protein is Cytochrome c oxidase subunit 2 (COX2) of Debaryomyces hansenii (strain ATCC 36239 / CBS 767 / BCRC 21394 / JCM 1990 / NBRC 0083 / IGC 2968) (Yeast).